A 334-amino-acid polypeptide reads, in one-letter code: Ketol-acid reductoisomerase (NADP(+)) (334 aa).

One can recognise a KARI N-terminal Rossmann domain in the interval 2–182 (PKMYYEKDTD…GGARAGVLET (181 aa)). NADP(+) contacts are provided by residues 25-28 (YGSQ), serine 51, serine 53, and 83-86 (DEKQ). Residue histidine 108 is part of the active site. Glycine 134 lines the NADP(+) pocket. A KARI C-terminal knotted domain is found at 183 to 328 (TFKDETETDL…KELRGMMSWI (146 aa)). Aspartate 191, glutamate 195, glutamate 227, and glutamate 231 together coordinate Mg(2+). Residue serine 252 participates in substrate binding.

Belongs to the ketol-acid reductoisomerase family. Requires Mg(2+) as cofactor.

It carries out the reaction (2R)-2,3-dihydroxy-3-methylbutanoate + NADP(+) = (2S)-2-acetolactate + NADPH + H(+). The enzyme catalyses (2R,3R)-2,3-dihydroxy-3-methylpentanoate + NADP(+) = (S)-2-ethyl-2-hydroxy-3-oxobutanoate + NADPH + H(+). It participates in amino-acid biosynthesis; L-isoleucine biosynthesis; L-isoleucine from 2-oxobutanoate: step 2/4. It functions in the pathway amino-acid biosynthesis; L-valine biosynthesis; L-valine from pyruvate: step 2/4. Involved in the biosynthesis of branched-chain amino acids (BCAA). Catalyzes an alkyl-migration followed by a ketol-acid reduction of (S)-2-acetolactate (S2AL) to yield (R)-2,3-dihydroxy-isovalerate. In the isomerase reaction, S2AL is rearranged via a Mg-dependent methyl migration to produce 3-hydroxy-3-methyl-2-ketobutyrate (HMKB). In the reductase reaction, this 2-ketoacid undergoes a metal-dependent reduction by NADPH to yield (R)-2,3-dihydroxy-isovalerate. The chain is Ketol-acid reductoisomerase (NADP(+)) from Clostridium beijerinckii (strain ATCC 51743 / NCIMB 8052) (Clostridium acetobutylicum).